A 451-amino-acid polypeptide reads, in one-letter code: UPF0210 protein NMA1908 (451 aa).

It belongs to the UPF0210 family. Homodimer.

The polypeptide is UPF0210 protein NMA1908 (Neisseria meningitidis serogroup A / serotype 4A (strain DSM 15465 / Z2491)).